The following is a 367-amino-acid chain: Phosphoribosylaminoimidazole-succinocarboxamide synthase (367 aa).

Belongs to the SAICAR synthetase family.

The enzyme catalyses 5-amino-1-(5-phospho-D-ribosyl)imidazole-4-carboxylate + L-aspartate + ATP = (2S)-2-[5-amino-1-(5-phospho-beta-D-ribosyl)imidazole-4-carboxamido]succinate + ADP + phosphate + 2 H(+). It functions in the pathway purine metabolism; IMP biosynthesis via de novo pathway; 5-amino-1-(5-phospho-D-ribosyl)imidazole-4-carboxamide from 5-amino-1-(5-phospho-D-ribosyl)imidazole-4-carboxylate: step 1/2. In Shewanella baltica (strain OS195), this protein is Phosphoribosylaminoimidazole-succinocarboxamide synthase.